Consider the following 326-residue polypeptide: GTP cyclohydrolase MptA (326 aa).

The protein belongs to the GTP cyclohydrolase IV family. In terms of assembly, homodimer. It depends on Fe(2+) as a cofactor.

The enzyme catalyses GTP + H2O = 7,8-dihydroneopterin 2',3'-cyclic phosphate + formate + diphosphate + H(+). It functions in the pathway cofactor biosynthesis; 5,6,7,8-tetrahydromethanopterin biosynthesis. Its function is as follows. Converts GTP to 7,8-dihydro-D-neopterin 2',3'-cyclic phosphate, the first intermediate in the biosynthesis of coenzyme methanopterin. The protein is GTP cyclohydrolase MptA of Methanoregula boonei (strain DSM 21154 / JCM 14090 / 6A8).